We begin with the raw amino-acid sequence, 476 residues long: Cytochrome c oxidase subunit 1 (476 aa).

A helical transmembrane segment spans residues 19 to 39 (LYYLWFSFLFGTYGFLLSVIL). Glu-42 lines the Ca(2+) pocket. The next 8 membrane-spanning stretches (helical) occupy residues 61-81 (MIFT…GLFG), 105-125 (ISLL…AAEF), 144-164 (LSPV…IASI), 194-214 (IIIT…GVLM), 240-260 (LFWF…FGVI), 278-298 (MILA…HHMY), 309-329 (FFTS…FNWL), and 345-365 (LLCL…VILG). Fe(II)-heme a is bound at residue His-66. His-246 is a Cu cation binding site. A cross-link (1'-histidyl-3'-tyrosine (His-Tyr)) is located at residues 246–250 (HPEVY). Tyr-250 contributes to the O2 binding site. The Cu cation site is built by His-295 and His-296. Residues His-374 and Asp-375 each coordinate Mg(2+). Transmembrane regions (helical) follow at residues 379 to 399 (VIAH…FTCV) and 415 to 435 (TLIV…FLPM). His-382 is a binding site for heme a3. Fe(II)-heme a is bound at residue His-384. Pro-448 lines the Ca(2+) pocket. The helical transmembrane segment at 455–475 (NGWNMICSIGSTMTLFGLLIF) threads the bilayer.

The protein belongs to the heme-copper respiratory oxidase family. In terms of assembly, component of the cytochrome c oxidase (complex IV, CIV), a multisubunit enzyme composed of a catalytic core of 3 subunits and several supernumerary subunits. The complex exists as a monomer or a dimer and forms supercomplexes (SCs) in the inner mitochondrial membrane with ubiquinol-cytochrome c oxidoreductase (cytochrome b-c1 complex, complex III, CIII). It depends on heme as a cofactor. Requires Cu cation as cofactor.

It is found in the mitochondrion inner membrane. It carries out the reaction 4 Fe(II)-[cytochrome c] + O2 + 8 H(+)(in) = 4 Fe(III)-[cytochrome c] + 2 H2O + 4 H(+)(out). The protein operates within energy metabolism; oxidative phosphorylation. Its function is as follows. Component of the cytochrome c oxidase, the last enzyme in the mitochondrial electron transport chain which drives oxidative phosphorylation. The respiratory chain contains 3 multisubunit complexes succinate dehydrogenase (complex II, CII), ubiquinol-cytochrome c oxidoreductase (cytochrome b-c1 complex, complex III, CIII) and cytochrome c oxidase (complex IV, CIV), that cooperate to transfer electrons derived from NADH and succinate to molecular oxygen, creating an electrochemical gradient over the inner membrane that drives transmembrane transport and the ATP synthase. Cytochrome c oxidase is the component of the respiratory chain that catalyzes the reduction of oxygen to water. Electrons originating from reduced cytochrome c in the intermembrane space (IMS) are transferred via the dinuclear copper A center (CU(A)) of subunit 2 and heme A of subunit 1 to the active site in subunit 1, a binuclear center (BNC) formed by heme A3 and copper B (CU(B)). The BNC reduces molecular oxygen to 2 water molecules using 4 electrons from cytochrome c in the IMS and 4 protons from the mitochondrial matrix. This is Cytochrome c oxidase subunit 1 (COI) from Plasmodium berghei.